Consider the following 321-residue polypeptide: Phospho-N-acetylmuramoyl-pentapeptide-transferase (321 aa).

The next 10 helical transmembrane spans lie at M1 to I21, M50 to V70, I76 to I96, F112 to V132, I140 to W160, G176 to L196, A200 to L220, V225 to M245, L250 to V270, and V300 to V320.

It belongs to the glycosyltransferase 4 family. MraY subfamily. It depends on Mg(2+) as a cofactor.

It localises to the cell membrane. It catalyses the reaction UDP-N-acetyl-alpha-D-muramoyl-L-alanyl-gamma-D-glutamyl-L-lysyl-D-alanyl-D-alanine + di-trans,octa-cis-undecaprenyl phosphate = Mur2Ac(oyl-L-Ala-gamma-D-Glu-L-Lys-D-Ala-D-Ala)-di-trans,octa-cis-undecaprenyl diphosphate + UMP. It functions in the pathway cell wall biogenesis; peptidoglycan biosynthesis. In terms of biological role, catalyzes the initial step of the lipid cycle reactions in the biosynthesis of the cell wall peptidoglycan: transfers peptidoglycan precursor phospho-MurNAc-pentapeptide from UDP-MurNAc-pentapeptide onto the lipid carrier undecaprenyl phosphate, yielding undecaprenyl-pyrophosphoryl-MurNAc-pentapeptide, known as lipid I. This chain is Phospho-N-acetylmuramoyl-pentapeptide-transferase, found in Staphylococcus haemolyticus (strain JCSC1435).